The chain runs to 61 residues: Bacteriocin leucocin-B (61 aa).

The propeptide occupies 1–24 (MNNMKSADNYQQLDNNALEQVVGG). Cysteines 33 and 38 form a disulfide.

This sequence belongs to the bacteriocin class IIA/YGNGV family.

It localises to the secreted. Its function is as follows. Active against L.monocytogenes and several lactic acid bacteria. In Leuconostoc carnosum, this protein is Bacteriocin leucocin-B.